A 54-amino-acid chain; its full sequence is Large ribosomal subunit protein bL33A (54 aa).

The protein belongs to the bacterial ribosomal protein bL33 family.

This chain is Large ribosomal subunit protein bL33A, found in Streptomyces avermitilis (strain ATCC 31267 / DSM 46492 / JCM 5070 / NBRC 14893 / NCIMB 12804 / NRRL 8165 / MA-4680).